The primary structure comprises 179 residues: ATP-dependent protease subunit HslV (179 aa).

Threonine 7 is a catalytic residue. Na(+)-binding residues include glycine 162, cysteine 165, and threonine 168.

The protein belongs to the peptidase T1B family. HslV subfamily. As to quaternary structure, a double ring-shaped homohexamer of HslV is capped on each side by a ring-shaped HslU homohexamer. The assembly of the HslU/HslV complex is dependent on binding of ATP.

It localises to the cytoplasm. The catalysed reaction is ATP-dependent cleavage of peptide bonds with broad specificity.. Allosterically activated by HslU binding. Its function is as follows. Protease subunit of a proteasome-like degradation complex believed to be a general protein degrading machinery. In Bordetella bronchiseptica (strain ATCC BAA-588 / NCTC 13252 / RB50) (Alcaligenes bronchisepticus), this protein is ATP-dependent protease subunit HslV.